The sequence spans 585 residues: Arginine--tRNA ligase (585 aa).

A 'HIGH' region motif is present at residues 131-141 (ANPTGPMHVGH).

The protein belongs to the class-I aminoacyl-tRNA synthetase family. As to quaternary structure, monomer.

The protein resides in the cytoplasm. It carries out the reaction tRNA(Arg) + L-arginine + ATP = L-arginyl-tRNA(Arg) + AMP + diphosphate. This is Arginine--tRNA ligase from Allorhizobium ampelinum (strain ATCC BAA-846 / DSM 112012 / S4) (Agrobacterium vitis (strain S4)).